The chain runs to 137 residues: Neutral phospholipase A2 ammodytin I2 (137 aa).

The N-terminal stretch at Met-1–Gly-16 is a signal peptide. Intrachain disulfides connect Cys-42/Cys-131, Cys-44/Cys-60, Cys-59/Cys-111, Cys-65/Cys-137, Cys-66/Cys-104, Cys-73/Cys-97, and Cys-91/Cys-102. Residues Tyr-43, Gly-45, and Gly-47 each coordinate Ca(2+). Residue His-63 is part of the active site. Asp-64 provides a ligand contact to Ca(2+). Asp-105 is an active-site residue.

This sequence belongs to the phospholipase A2 family. Group II subfamily. D49 sub-subfamily. It depends on Ca(2+) as a cofactor. In terms of tissue distribution, expressed by the venom gland.

The protein localises to the secreted. It carries out the reaction a 1,2-diacyl-sn-glycero-3-phosphocholine + H2O = a 1-acyl-sn-glycero-3-phosphocholine + a fatty acid + H(+). Functionally, snake venom phospholipase A2 (PLA2) that has enzymatic activity but is non-toxic. Displays low binding affinity and enzymatic activity on phosphatidylserine-containing vesicles and HEK-293 plasma membranes, in contrast to ammodytoxins that have high activity on these phospholipids. PLA2 catalyzes the calcium-dependent hydrolysis of the 2-acyl groups in 3-sn-phosphoglycerides. The protein is Neutral phospholipase A2 ammodytin I2 of Vipera ammodytes ammodytes (Western sand viper).